We begin with the raw amino-acid sequence, 191 residues long: MLKNLRETMRTAPIVRRGTYNYFIHPISDGVPVVKPELLREVIACMVKNADLDVDKIVTIEAMGLPLGAALSTMTDIPFIIIRKRKYELPGEIAVHQTTGYSRGELYLNGINKGDRVLIIDDVISTGGTMKAVIKALEKAGAVIKDIVVVIERGDGKKSIEELGYDVQTLIKIDVDENGVKILGCIDEECQ.

This sequence belongs to the purine/pyrimidine phosphoribosyltransferase family. Archaeal HPRT subfamily. Homodimer.

The protein resides in the cytoplasm. The enzyme catalyses IMP + diphosphate = hypoxanthine + 5-phospho-alpha-D-ribose 1-diphosphate. It catalyses the reaction GMP + diphosphate = guanine + 5-phospho-alpha-D-ribose 1-diphosphate. It participates in purine metabolism; IMP biosynthesis via salvage pathway; IMP from hypoxanthine: step 1/1. Its function is as follows. Catalyzes a salvage reaction resulting in the formation of IMP that is energically less costly than de novo synthesis. The polypeptide is Hypoxanthine/guanine phosphoribosyltransferase (Methanocella paludicola (strain DSM 17711 / JCM 13418 / NBRC 101707 / SANAE)).